The primary structure comprises 346 residues: GTP 3',8-cyclase (346 aa).

One can recognise a Radical SAM core domain in the interval 10-240; it reads QRSRPLRVLR…VTRIRARWPL (231 aa). Residue Arg19 participates in GTP binding. Cys26 and Cys30 together coordinate [4Fe-4S] cluster. Tyr32 provides a ligand contact to S-adenosyl-L-methionine. Cys33 is a binding site for [4Fe-4S] cluster. Arg65 contacts GTP. S-adenosyl-L-methionine is bound at residue Gly69. A GTP-binding site is contributed by Thr104. Residue Ser129 coordinates S-adenosyl-L-methionine. Lys177 is a binding site for GTP. Met211 lines the S-adenosyl-L-methionine pocket. [4Fe-4S] cluster is bound by residues Cys274 and Cys277. Residue 279 to 281 coordinates GTP; the sequence is RLR. A [4Fe-4S] cluster-binding site is contributed by Cys291. The interval 326-346 is disordered; that stretch reads SDERQQTTGSMPHAEMAYLGG.

It belongs to the radical SAM superfamily. MoaA family. Monomer and homodimer. [4Fe-4S] cluster serves as cofactor.

It catalyses the reaction GTP + AH2 + S-adenosyl-L-methionine = (8S)-3',8-cyclo-7,8-dihydroguanosine 5'-triphosphate + 5'-deoxyadenosine + L-methionine + A + H(+). The protein operates within cofactor biosynthesis; molybdopterin biosynthesis. Its function is as follows. Catalyzes the cyclization of GTP to (8S)-3',8-cyclo-7,8-dihydroguanosine 5'-triphosphate. This Parasynechococcus marenigrum (strain WH8102) protein is GTP 3',8-cyclase.